Consider the following 465-residue polypeptide: Ribulose bisphosphate carboxylase large chain (465 aa).

Lys-4 is subject to N6,N6,N6-trimethyllysine. Substrate contacts are provided by Asn-113 and Thr-163. Residue Lys-165 is the Proton acceptor of the active site. Residue Lys-167 participates in substrate binding. Residues Lys-191, Asp-193, and Glu-194 each coordinate Mg(2+). The residue at position 191 (Lys-191) is an N6-carboxylysine. His-284 serves as the catalytic Proton acceptor. Substrate contacts are provided by Arg-285, His-317, and Ser-369.

The protein belongs to the RuBisCO large chain family. Type I subfamily. Heterohexadecamer of 8 large chains and 8 small chains; disulfide-linked. The disulfide link is formed within the large subunit homodimers. Mg(2+) is required as a cofactor. The disulfide bond which can form in the large chain dimeric partners within the hexadecamer appears to be associated with oxidative stress and protein turnover.

It localises to the plastid. The protein resides in the chloroplast. The enzyme catalyses 2 (2R)-3-phosphoglycerate + 2 H(+) = D-ribulose 1,5-bisphosphate + CO2 + H2O. It catalyses the reaction D-ribulose 1,5-bisphosphate + O2 = 2-phosphoglycolate + (2R)-3-phosphoglycerate + 2 H(+). RuBisCO catalyzes two reactions: the carboxylation of D-ribulose 1,5-bisphosphate, the primary event in carbon dioxide fixation, as well as the oxidative fragmentation of the pentose substrate in the photorespiration process. Both reactions occur simultaneously and in competition at the same active site. This Ailanthus altissima (Tree-of-heaven) protein is Ribulose bisphosphate carboxylase large chain.